A 226-amino-acid chain; its full sequence is Leucyl/phenylalanyl-tRNA--protein transferase (226 aa).

The protein belongs to the L/F-transferase family.

The protein localises to the cytoplasm. The enzyme catalyses N-terminal L-lysyl-[protein] + L-leucyl-tRNA(Leu) = N-terminal L-leucyl-L-lysyl-[protein] + tRNA(Leu) + H(+). It carries out the reaction N-terminal L-arginyl-[protein] + L-leucyl-tRNA(Leu) = N-terminal L-leucyl-L-arginyl-[protein] + tRNA(Leu) + H(+). The catalysed reaction is L-phenylalanyl-tRNA(Phe) + an N-terminal L-alpha-aminoacyl-[protein] = an N-terminal L-phenylalanyl-L-alpha-aminoacyl-[protein] + tRNA(Phe). In terms of biological role, functions in the N-end rule pathway of protein degradation where it conjugates Leu, Phe and, less efficiently, Met from aminoacyl-tRNAs to the N-termini of proteins containing an N-terminal arginine or lysine. The polypeptide is Leucyl/phenylalanyl-tRNA--protein transferase (Azotobacter vinelandii (strain DJ / ATCC BAA-1303)).